The primary structure comprises 57 residues: MKRSRTEVGRWRMQRQASRRKSRWLEGQSRRNMRIHSIRKCILNKQRNSLLFAIYNI.

Residues 1–10 (MKRSRTEVGR) show a composition bias toward basic and acidic residues. Positions 1–25 (MKRSRTEVGRWRMQRQASRRKSRWL) are disordered.

The protein belongs to the YciY family.

This is an uncharacterized protein from Escherichia coli O1:K1 / APEC.